Consider the following 1454-residue polypeptide: MSFDLTTPFDVIKTVSLSARYSWTTSQKGATLNITYNDKNFVLSSSLQLSTRASNITFQATTPFEGFQNSFIEIKYDIDNREELLASRVSVDDHSYSFVVGGYIEDKLAVFKWNLNSPLTGWTDAKFVAKIDLSSENKNLEISLEKEGDLKAIAVSGKFIGSTLDFNLRTPFRGLNNFNVFGSLNRSKRSLEMRMMNDAGQASLAGNFNSLRFNMKTPFERAEQISWEVTKTGEGSYKAEWRRNDNYATFTIEKDVSKQSFDLNIKSEFRGWEILALTGRLDQETKQAYLSGAINEQKITVTGSGSITNKIKFSMTIETPYENYRQVKAQLNYAKRKNAIKLEASSSSSDFHLLWSRSGSGLEAHLIVPNSRQNTEISINLTPTQGKITITSRFEPIRDYLQEYHVNLGQNEITADHIIKLNGHEVFKMDFERNAPEQKVHLEIHTHVAERHTTIHFHREGFSKLNFLFKREVPQYGEKHFKVDITGSGALPQKGALDIVVENTFREPAKTINARVEVDRTGARKKIMLEVSPRQSRVYIFNLEYIADLESPQHGDFTLKITTPNNSPWQNISGNWNVEDPNDATITFTVGNVTYNAKGKLTLRESTMILSSTDPSAENIYLQWKFERNGDTKDYFLKLGRKSRYGMLKLTGTITDIAHVDIEGGFKAGPFMPNEFLFTSMWGKSNGVVTGEGTFDYGNYHGSHRLVKFERNAERKSASFEWSATSNIPQYNSVSVSGNYDFNHKVVIFVVINADGRESKIDINIADINPTSSRNTAMISIPLLGPTFKRTELTVSHDFSHPNRKSISAVAKFGRSESFINAKWNRSDGFDTLEGNIEAKSRFLGDFLINVRYDMSNIADAHAEVDYLRTTTDGDKKEFKLNWTRKSTDDHLENEMVFDSNFETLSHARAYANADYGGIFKLLSGLDWDDKKISLTLEVRKNKISGILTTPFEGFETLEIDLQYKLTGKDKSVKATYQRGDRKASFNMEMSTKGKKGGSFKVDLTTPFEVVKNLHIDGQYENKVAQINYQRNDIQMNFNGKANIKSSKASFDISFTPPSGQNIRIAASYDVQDFIDGTGDEEKELASLSLEFEGNSMDFSLHGFRNDDRLYVMIHGTSSFAVLKMFHLKLDSELNTEARDGTFELTFNDFKFNVSNHFERRANNGYYFRSKIESTLTPLPALIIGLGREGQERIITIGYGEDKEITFSVKGKNNFLSGFSGKVDIPSIGYEGVEYDVDYSFPGDNHLQIKVEIDLNENGQEVEATFFLDSEGIKARLSSAVLGDHSLRVRRSVAPDGFYAEAGLDDYNLKLRGGFKNEDTARGVQLEGEVFGKRFLIDTLFQSEGKRYSEGKLIIHTPFHGMEKMGGLFTWSNQNKKIMAHAELHLPSYTTPTITGEISLDLKKKINGYVTLDVAGEEFTLKCNLAGSSISQGYTGSLEFYTTIPCCITCCGDR.

Residues 1–197 (MSFDLTTPFD…KRSLEMRMMN (197 aa)) constitute a propeptide that is removed on maturation. Residues Asn33, Asn55, Asn185, Asn571, Asn592, Asn825, Asn882, and Asn1153 are each glycosylated (N-linked (GlcNAc...) asparagine).

It belongs to the glycosyl hydrolase 16 family. As to quaternary structure, monomer. In terms of tissue distribution, expressed in the hepatopancreas and secreted into the hemolymph. Expressed at lower levels in muscle, pleopod and gill tissue.

The protein resides in the secreted. Involved in the recognition of invading microorganisms. Binds specifically to beta-1,3-glucan and activates the prophenoloxidase cascade. This chain is Beta-1,3-glucan-binding protein, found in Penaeus vannamei (Whiteleg shrimp).